The following is a 950-amino-acid chain: Protocadherin alpha-1 (950 aa).

The signal sequence occupies residues 1-29; it reads MVFSRRGGLGARDLLLWLLLLAAWEVGSG. Cadherin domains are found at residues 30–133, 157–242, 243–350, 351–455, 456–565, and 588–678; these read QLHY…PPVF, AADA…APLF, DQAV…APEL, AVTS…APAF, AQPE…APAL, and GHVV…APKA. The Extracellular segment spans residues 30–697; the sequence is QLHYSIPEEA…GPEAALVDVN (668 aa). N-linked (GlcNAc...) asparagine glycans are attached at residues Asn-257 and Asn-265. Asn-548 carries an N-linked (GlcNAc...) asparagine glycan. A helical transmembrane segment spans residues 698–718; sequence VYLIIAICAVSSLLVLTLLLY. Over 719–950 the chain is Cytoplasmic; sequence TALRCSVPPT…GNSTTDNSDQ (232 aa). PXXP repeat units follow at residues 734 to 737, 799 to 802, 832 to 835, 873 to 876, and 891 to 894; these read PGKP, PRQP, PGGP, PGNP, and PGSP. A 5 X 4 AA repeats of P-X-X-P region spans residues 734 to 894; the sequence is PGKPTLVCSS…PDKFIIPGSP (161 aa). Disordered stretches follow at residues 752-808, 828-856, and 871-890; these read QQRR…DWRY, LRAG…EVSP, and YGPG…KFII. The interval 900–950 is disordered; it reads RQEPTNSQIDKSDFITFGKKEETKKKKKKKKGNKTQEKKEKGNSTTDNSDQ. Over residues 909 to 923 the composition is skewed to basic and acidic residues; it reads DKSDFITFGKKEETK.

The protein localises to the cell membrane. Its subcellular location is the secreted. Its function is as follows. Potential calcium-dependent cell-adhesion protein. May be involved in the establishment and maintenance of specific neuronal connections in the brain. The polypeptide is Protocadherin alpha-1 (PCDHA1) (Homo sapiens (Human)).